A 195-amino-acid polypeptide reads, in one-letter code: Imidazoleglycerol-phosphate dehydratase (195 aa).

The protein belongs to the imidazoleglycerol-phosphate dehydratase family.

The protein resides in the cytoplasm. The enzyme catalyses D-erythro-1-(imidazol-4-yl)glycerol 3-phosphate = 3-(imidazol-4-yl)-2-oxopropyl phosphate + H2O. Its pathway is amino-acid biosynthesis; L-histidine biosynthesis; L-histidine from 5-phospho-alpha-D-ribose 1-diphosphate: step 6/9. The chain is Imidazoleglycerol-phosphate dehydratase from Campylobacter concisus (strain 13826).